Consider the following 262-residue polypeptide: tRNA pseudouridine synthase A (262 aa).

Aspartate 51 (nucleophile) is an active-site residue. Residue tyrosine 109 participates in substrate binding.

The protein belongs to the tRNA pseudouridine synthase TruA family. In terms of assembly, homodimer.

The catalysed reaction is uridine(38/39/40) in tRNA = pseudouridine(38/39/40) in tRNA. Functionally, formation of pseudouridine at positions 38, 39 and 40 in the anticodon stem and loop of transfer RNAs. The protein is tRNA pseudouridine synthase A of Legionella pneumophila (strain Paris).